Consider the following 168-residue polypeptide: Nicotinamide-nucleotide adenylyltransferase (168 aa).

The protein belongs to the archaeal NMN adenylyltransferase family.

Its subcellular location is the cytoplasm. The catalysed reaction is beta-nicotinamide D-ribonucleotide + ATP + H(+) = diphosphate + NAD(+). It participates in cofactor biosynthesis; NAD(+) biosynthesis; NAD(+) from nicotinamide D-ribonucleotide: step 1/1. The polypeptide is Nicotinamide-nucleotide adenylyltransferase (Methanosphaerula palustris (strain ATCC BAA-1556 / DSM 19958 / E1-9c)).